Reading from the N-terminus, the 274-residue chain is Thiamine kinase (274 aa).

It belongs to the thiamine kinase family.

It carries out the reaction thiamine + ATP = thiamine phosphate + ADP + H(+). It functions in the pathway cofactor biosynthesis; thiamine diphosphate biosynthesis; thiamine phosphate from thiamine: step 1/1. Its function is as follows. Catalyzes the ATP-dependent phosphorylation of thiamine to thiamine phosphate. Is involved in thiamine salvage. The sequence is that of Thiamine kinase from Escherichia coli O9:H4 (strain HS).